A 201-amino-acid polypeptide reads, in one-letter code: TDSEPGAVILGFKASMTDVYAFPMTIGVRAHEPSDVMSKVRALEPSDMSKRAVAGMKEFYVRAEGIHGTDKSPVITARMKPVHSIGSVRAHFIDGKPTPIKVRAFGPITESMLDEHSMTIGRYEVIASRKYPSDYRHVFGMETSALDRVYAIKGEHRAFSDVSPTHATIEMESPAAHDFLYGRAKVDEPMTIRVAFHSTCM.

In terms of assembly, this is one of six apparently different protein chains that constitute the peanut protein arachin.

The chain is Arachin 25 kDa protein from Arachis hypogaea (Peanut).